Reading from the N-terminus, the 355-residue chain is Neutral protease 2 homolog AFUB_100460 (355 aa).

A signal peptide spans 1 to 19 (MKITALASAILAVAQGALA). Positions 20-172 (LPARAPALDI…PASIKPLDRR (153 aa)) are excised as a propeptide. Intrachain disulfides connect Cys179–Cys251 and Cys258–Cys276. Residue His300 coordinates Zn(2+). Glu301 is an active-site residue. Residues His304 and Asp315 each contribute to the Zn(2+) site.

This sequence belongs to the peptidase M35 family. Zn(2+) is required as a cofactor.

Its subcellular location is the secreted. The enzyme catalyses Preferential cleavage of bonds with hydrophobic residues in P1'. Also 3-Asn-|-Gln-4 and 8-Gly-|-Ser-9 bonds in insulin B chain.. Secreted metalloproteinase that allows assimilation of proteinaceous substrates. Shows high activities on basic nuclear substrates such as histone and protamine. May be involved in virulence. This chain is Neutral protease 2 homolog AFUB_100460, found in Aspergillus fumigatus (strain CBS 144.89 / FGSC A1163 / CEA10) (Neosartorya fumigata).